The chain runs to 877 residues: Transcriptional corepressor SEUSS (877 aa).

Disordered regions lie at residues 1 to 42 (MVPS…VSPR) and 272 to 295 (LKSMPQQRPQLPQQFQQQNLPLRP). A compositionally biased stretch (low complexity) spans 272 to 292 (LKSMPQQRPQLPQQFQQQNLP). The interval 321–563 (PEDNNIEFWR…ETRTGPIESL (243 aa)) is dimerization. Residues 330–344 (RKFVAEYFAPNAKKR) carry the Nuclear localization signal motif. Disordered regions lie at residues 560-599 (IESLAKFPRRTGPSSALPGPSPQQASDQLRQQQQQQQQQQ), 612-633 (QQTVSQNTNSDQSSRQVALMQG), and 666-753 (GRHQ…NESS). Positions 582 to 618 (QQASDQLRQQQQQQQQQQQQQQQQQQQQQQQQTVSQN) form a coiled coil. Residues 590-599 (QQQQQQQQQQ) show a composition bias toward low complexity. Residues 614-633 (TVSQNTNSDQSSRQVALMQG) are compositionally biased toward polar residues. 2 stretches are compositionally biased toward low complexity: residues 688–703 (QSPSSSGTMVPSSSQQ) and 711–725 (QSPTSSSNNNNPSQN). Residues 726–741 (GIPSVNHMGSTNSPAM) are compositionally biased toward polar residues.

It belongs to the adn1/SEU family. In terms of assembly, forms a corepressor complex with LUG; LUG is the transcription repressor subunit and SEU the specific DNA-binding adapter. Interacts with AGL24-AP1 and SVP-AP1 dimers when complexed to SEU. Interacts with AP1/AGL7 and SEP3/AGL9. Binds to LUH. In terms of tissue distribution, expressed in root, leaves, seedlings, vegetative and reproductive shoot apical meristems, seeds, floral meristems and all floral organs.

The protein localises to the nucleus. Its subcellular location is the nucleoplasm. DNA-binding adapter subunit of the SEU-LUG transcriptional corepressor of the C class floral homeotic gene AGAMOUS during the early stages of floral meristem development. Is part of the A class cadastral complex that define the boundaries between the A and C class homeotic genes expression and function. Interacts together with APETALA2 and LEUNIG to repress AGAMOUS expression. In association with LUG, regulates petal shape through AGAMOUS-independent mechanisms. Controls cell division during petal development and enable the proper patterning of petal blade vasculature. Required for the proper elaboration of petal polarity along the adaxial/abaxial axis. May act through direct or indirect regulation of PHABULOSA and YAB1 and thus regulate cellular proliferation within the developing petal blade. In association with AINTEGUMENTA (ANT), coordinates patterning cues and cellular proliferation along the three positional axes of the developing gynoecium. Required for the development of the medial ridge and subsequent ovule initiation. This chain is Transcriptional corepressor SEUSS (SEU), found in Arabidopsis thaliana (Mouse-ear cress).